Reading from the N-terminus, the 675-residue chain is Metal-nicotianamine transporter YSL3 (675 aa).

A run of 14 helical transmembrane segments spans residues 42–62, 66–86, 114–134, 159–179, 219–239, 280–300, 325–345, 386–406, 408–428, 450–470, 504–524, 556–576, 602–622, and 630–650; these read ITFR…VIVM, LTTG…FVFL, CAVA…LLGL, GIGW…LALV, VFGF…QWFF, IVNI…WPLI, VFIS…KILF, IPLW…IIAI, IMFP…APSL, VALF…AGLV, VSQA…FFLF, FSAL…FAVA, FLVG…VFAW, and AGLM…LWIL.

Belongs to the YSL (TC 2.A.67.2) family. Expressed in leaves, anthers and pollen grains. Restricted to the vasculature.

The protein resides in the membrane. May be involved in the lateral transport of nicotianamine-chelated metals in the vasculature. The polypeptide is Metal-nicotianamine transporter YSL3 (YSL3) (Arabidopsis thaliana (Mouse-ear cress)).